Consider the following 153-residue polypeptide: Insulin-like growth factor 1 (153 aa).

The interval glycine 49 to threonine 77 is b. 3 disulfides stabilise this stretch: cysteine 54–cysteine 96, cysteine 66–cysteine 109, and cysteine 95–cysteine 100. The interval glycine 78 to threonine 89 is c. The segment at glycine 90 to alanine 110 is a. Residues proline 111–alanine 118 are d. Residues arginine 119–methionine 153 constitute a propeptide, e peptide. Residues arginine 119 to methionine 153 form a disordered region. A compositionally biased stretch (basic and acidic residues) spans arginine 125–leucine 138. Residues lysine 139 to methionine 153 show a composition bias toward polar residues.

This sequence belongs to the insulin family. As to quaternary structure, forms a ternary complex with IGFR1 and ITGAV:ITGB3. Forms a ternary complex with IGFR1 and ITGA6:ITGB4. Forms a ternary complex with IGFBP3 and ALS.

The protein resides in the secreted. In terms of biological role, the insulin-like growth factors, isolated from plasma, are structurally and functionally related to insulin but have a much higher growth-promoting activity. May be a physiological regulator of [1-14C]-2-deoxy-D-glucose (2DG) transport and glycogen synthesis in osteoblasts. Stimulates glucose transport in bone-derived osteoblastic (PyMS) cells and is effective at much lower concentrations than insulin, not only regarding glycogen and DNA synthesis but also with regard to enhancing glucose uptake. May play a role in synapse maturation. Ca(2+)-dependent exocytosis of IGF1 is required for sensory perception of smell in the olfactory bulb. Acts as a ligand for IGF1R. Binds to the alpha subunit of IGF1R, leading to the activation of the intrinsic tyrosine kinase activity which autophosphorylates tyrosine residues in the beta subunit thus initiating a cascade of down-stream signaling events leading to activation of the PI3K-AKT/PKB and the Ras-MAPK pathways. Binds to integrins ITGAV:ITGB3 and ITGA6:ITGB4. Its binding to integrins and subsequent ternary complex formation with integrins and IGFR1 are essential for IGF1 signaling. Induces the phosphorylation and activation of IGFR1, MAPK3/ERK1, MAPK1/ERK2 and AKT1. As part of the MAPK/ERK signaling pathway, acts as a negative regulator of apoptosis in cardiomyocytes via promotion of STUB1/CHIP-mediated ubiquitination and degradation of ICER-type isoforms of CREM. In Rattus norvegicus (Rat), this protein is Insulin-like growth factor 1.